Reading from the N-terminus, the 315-residue chain is Transcription repressor OFP7 (315 aa).

The disordered stretch occupies residues 113–183; the sequence is YETPRRKIYN…ELPRVTRRPR (71 aa). Residues 130–145 show a composition bias toward basic residues; it reads RRRLKKKEKSNSRRRG. Residues 160 to 174 are compositionally biased toward polar residues; that stretch reads LPSSTNLSPEYSSSE. The OVATE domain maps to 230–289; that stretch reads VVKKSEDPYEDFKGSMMEMIVEKKMFEVAELEQLLSCFLSLNAKRHHRAIVRAFSEIWVA.

As to expression, expressed in roots, shoots, stems, flower buds and siliques.

It localises to the nucleus. Functionally, transcriptional repressor that regulates multiple aspects of plant growth and development through the regulation of BEL1-LIKE (BLH) and KNOX TALE (KNAT) homeodomain transcription factors. The polypeptide is Transcription repressor OFP7 (OFP7) (Arabidopsis thaliana (Mouse-ear cress)).